The following is a 480-amino-acid chain: Glutathione reductase (480 aa).

Ser31 and Gly32 together coordinate FAD. Residue Ser31 participates in glutathione binding. Arg38 lines the glutathione pocket. FAD contacts are provided by Glu51, Thr58, Cys59, and Lys67. Cys59 and Cys64 form a disulfide bridge. Residue Tyr121 participates in glutathione binding. An FAD-binding site is contributed by Ala137. Ile206, Glu209, Arg226, and Gly291 together coordinate NADP(+). Asp331 lines the FAD pocket. Glu337 serves as a coordination point for NADP(+). Thr339 provides a ligand contact to FAD. Arg347 contacts glutathione. Val372 contributes to the NADP(+) binding site. Lys422 contributes to the glutathione binding site. His469 is an FAD binding site. His469 (proton acceptor) is an active-site residue.

Belongs to the class-I pyridine nucleotide-disulfide oxidoreductase family. In terms of assembly, homodimer. It depends on FAD as a cofactor.

Its subcellular location is the cytoplasm. The protein localises to the mitochondrion. The enzyme catalyses 2 glutathione + NADP(+) = glutathione disulfide + NADPH + H(+). Catalyzes the reduction of glutathione disulfide (GSSG) to reduced glutathione (GSH). Constitutes the major mechanism to maintain a high GSH:GSSG ratio in the cytosol. This Eremothecium gossypii (strain ATCC 10895 / CBS 109.51 / FGSC 9923 / NRRL Y-1056) (Yeast) protein is Glutathione reductase (GLR1).